A 118-amino-acid polypeptide reads, in one-letter code: NLYQFKNMIHCTVPNRPWWHFANYGCYCGRGGKGTPVDDLDRCCQIHDKCYDEAEKISGCWPYIKTYTYESCQGTLTCKDGGKCAASVCDCDRVAANCFARATYNDKNYNIDFNARCQ.

Intrachain disulfides connect Cys-11/Cys-72, Cys-26/Cys-117, Cys-28/Cys-44, Cys-43/Cys-98, Cys-50/Cys-91, Cys-60/Cys-84, and Cys-78/Cys-89. Ca(2+) contacts are provided by Tyr-27, Gly-29, and Gly-31. His-47 is an active-site residue. Residue Asp-48 coordinates Ca(2+). Asp-92 is a catalytic residue.

The protein belongs to the phospholipase A2 family. Group I subfamily. D49 sub-subfamily. Ca(2+) serves as cofactor. In terms of tissue distribution, expressed by the venom gland.

The protein localises to the secreted. The catalysed reaction is a 1,2-diacyl-sn-glycero-3-phosphocholine + H2O = a 1-acyl-sn-glycero-3-phosphocholine + a fatty acid + H(+). Functionally, PLA2 catalyzes the calcium-dependent hydrolysis of the 2-acyl groups in 3-sn-phosphoglycerides. The polypeptide is Basic phospholipase A2 1 (Naja melanoleuca (Forest cobra)).